A 27-amino-acid chain; its full sequence is Peptide Cn29 (27 aa).

Intrachain disulfides connect Cys2-Cys23, Cys5-Cys18, and Cys12-Cys25.

Expressed by the venom gland.

The protein localises to the secreted. The protein is Peptide Cn29 of Centruroides noxius (Mexican scorpion).